Reading from the N-terminus, the 417-residue chain is Sterile alpha motif domain-containing protein 14 (417 aa).

The interval Gln36–Ser302 is disordered. The segment covering Lys40–Ser49 has biased composition (basic residues). Residues Ser84 and Ser108 each carry the phosphoserine modification. Low complexity predominate over residues Ser138 to Ser153. Basic and acidic residues predominate over residues Pro159–Ser173. Phosphoserine is present on residues Ser173 and Ser179. 2 stretches are compositionally biased toward low complexity: residues Ser244 to Ser260 and Ser276 to Pro289. At Ser279 the chain carries Phosphoserine. At Thr283 the chain carries Phosphothreonine. An SAM domain is found at Trp326 to Ala389. Residues Asp375–Lys416 adopt a coiled-coil conformation. Residues Ala390–Ser417 are disordered.

This is Sterile alpha motif domain-containing protein 14 (Samd14) from Mus musculus (Mouse).